The chain runs to 372 residues: Fatty acid 2-hydroxylase (372 aa).

The Cytochrome b5 heme-binding domain occupies 8–86 (AASFSPSEVQ…LEQYYVGELR (79 aa)). Positions 43 and 69 each coordinate heme. Helical transmembrane passes span 168–188 (VWYSVPIIWVPLVLYLSWSYY) and 213–233 (SMFPGLFMLGTFLWSLIEYLI). The region spanning 219–361 (FMLGTFLWSL…TKLWDYCFHT (143 aa)) is the Fatty acid hydroxylase domain. 5 residues coordinate Zn(2+): H234, H239, H257, H260, and H261. 2 helical membrane-spanning segments follow: residues 268-288 (SRLVFPPVPASLVIGVFYLCM) and 290-310 (LILPEAVGGTVFAGGLLGYVL). Residues H315, H319, H336, H339, and H340 each contribute to the Zn(2+) site.

The protein belongs to the sterol desaturase family. SCS7 subfamily. Zn(2+) serves as cofactor. As to expression, detected in differentiating cultured keratinocytes (at protein level). Detected in epidermis and cultured keratinocytes. Highly expressed in brain and colon. Detected at lower levels in testis, prostate, pancreas and kidney.

It localises to the endoplasmic reticulum membrane. The protein resides in the microsome membrane. It catalyses the reaction a 1,2-saturated fatty acid + 2 Fe(II)-[cytochrome b5] + O2 + 2 H(+) = a (R)-2-hydroxy fatty acid + 2 Fe(III)-[cytochrome b5] + H2O. The enzyme catalyses hexadecanoate + 2 Fe(II)-[cytochrome b5] + O2 + 2 H(+) = (R)-2-hydroxyhexadecanoate + 2 Fe(III)-[cytochrome b5] + H2O. The catalysed reaction is octadecanoate + 2 Fe(II)-[cytochrome b5] + O2 + 2 H(+) = (R)-2-hydroxyoctadecanoate + 2 Fe(III)-[cytochrome b5] + H2O. It carries out the reaction docosanoate + 2 Fe(II)-[cytochrome b5] + O2 + 2 H(+) = 2-hydroxydocosanoate + 2 Fe(III)-[cytochrome b5] + H2O. It catalyses the reaction tetracosanoate + 2 Fe(II)-[cytochrome b5] + O2 + 2 H(+) = (R)-2-hydroxytetracosanoate + 2 Fe(III)-[cytochrome b5] + H2O. Its pathway is lipid metabolism; fatty acid metabolism. It participates in sphingolipid metabolism; galactosylceramide biosynthesis. Catalyzes the hydroxylation of free fatty acids at the C-2 position to produce 2-hydroxy fatty acids, which are building blocks of sphingolipids and glycosphingolipids common in neural tissue and epidermis. FA2H is stereospecific for the production of (R)-2-hydroxy fatty acids. Plays an essential role in the synthesis of galactosphingolipids of the myelin sheath. Responsible for the synthesis of sphingolipids and glycosphingolipids involved in the formation of epidermal lamellar bodies critical for skin permeability barrier. Participates in the synthesis of glycosphingolipids and a fraction of type II wax diesters in sebaceous gland, specifically regulating hair follicle homeostasis. Involved in the synthesis of sphingolipids of plasma membrane rafts, controlling lipid raft mobility and trafficking of raft-associated proteins. The polypeptide is Fatty acid 2-hydroxylase (Homo sapiens (Human)).